We begin with the raw amino-acid sequence, 302 residues long: Lysosomal thioesterase PPT2 (302 aa).

A signal peptide spans 1-27 (MPGLWRQRLPSAWALLLLPFLPLLMPA). The N-linked (GlcNAc...) asparagine glycan is linked to Asn-60. Disulfide bonds link Cys-109/Cys-117 and Cys-165/Cys-176. Ser-111 functions as the Nucleophile in the catalytic mechanism. Residues Asn-190 and Asn-206 are each glycosylated (N-linked (GlcNAc...) asparagine). Asp-228 is an active-site residue. A glycan (N-linked (GlcNAc...) asparagine) is linked at Asn-245. The cysteines at positions 276 and 296 are disulfide-linked. His-283 is a catalytic residue. Asn-289 carries an N-linked (GlcNAc...) asparagine glycan.

This sequence belongs to the palmitoyl-protein thioesterase family. Expressed throughout the brain, primarily in neurons, and at lower levels in glial cells.

It is found in the lysosome. It catalyses the reaction hexadecanoyl-CoA + H2O = hexadecanoate + CoA + H(+). The enzyme catalyses S-hexadecanoyl-N-acetylcysteamine + H2O = N-acetylcysteamine + hexadecanoate + H(+). In terms of biological role, catalyzes the cleavage of thioester bonds from S-palmitoyl-CoA or S-palmitoyl-N-acetylcysteamine (unbranched structures) but does not have activity against palmitoylcysteine or palmitoylated proteins, branched structures or bulky head groups. Conversely, hydrolyzes both long and short chain fatty acyl-CoA substrate. This is Lysosomal thioesterase PPT2 (Ppt2) from Mus musculus (Mouse).